A 526-amino-acid polypeptide reads, in one-letter code: Sugar transport protein 13 (526 aa).

The Cytoplasmic portion of the chain corresponds to 1–18 (MTGGGFATSANGVEFEAK). A helical membrane pass occupies residues 19 to 39 (ITPIVIISCIMAATGGLMFGY). Residues 40-81 (DVGVSGGVTSMPDFLEKFFPVVYRKVVAGADKDSNYCKYDNQ) are Extracellular-facing. Residues 82-102 (GLQLFTSSLYLAGLTATFFAS) traverse the membrane as a helical segment. Topologically, residues 103-111 (YTTRTLGRR) are cytoplasmic. The chain crosses the membrane as a helical span at residues 112–132 (LTMLIAGVFFIIGVALNAGAQ). Topologically, residues 133 to 141 (DLAMLIAGR) are extracellular. Residues 142 to 162 (ILLGCGVGFANQAVPLFLSEI) form a helical membrane-spanning segment. Residues 163–168 (APTRIR) lie on the Cytoplasmic side of the membrane. Residues 169 to 189 (GGLNILFQLNVTIGILFANLV) form a helical membrane-spanning segment. Residues 190-203 (NYGTAKIKGGWGWR) are Extracellular-facing. Residues 204-224 (LSLGLAGIPALLLTVGALLVT) traverse the membrane as a helical segment. The Cytoplasmic segment spans residues 225-296 (ETPNSLVERG…IAVALQIFQQ (72 aa)). Residues 297–317 (CTGINAIMFYAPVLFSTLGFG) traverse the membrane as a helical segment. Over 318–319 (SD) the chain is Extracellular. A helical membrane pass occupies residues 320-340 (ASLYSAVVTGAVNVLSTLVSI). Residues 341–349 (YSVDKVGRR) lie on the Cytoplasmic side of the membrane. The chain crosses the membrane as a helical span at residues 350 to 370 (VLLLEAGVQMFFSQVVIAIIL). At 371-383 (GVKVTDTSTNLSK) the chain is on the extracellular side. The chain crosses the membrane as a helical span at residues 384 to 404 (GFAILVVVMICTYVAAFAWSW). Residues 405–426 (GPLGWLIPSETFPLETRSAGQS) lie on the Cytoplasmic side of the membrane. Residues 427-447 (VTVCVNLLFTFIIAQAFLSML) traverse the membrane as a helical segment. The Extracellular segment spans residues 448–451 (CHFK). A helical membrane pass occupies residues 452–472 (FGIFIFFSAWVLIMSVFVMFL). Over 473–526 (LPETKNIPIEEMTERVWKKHWFWARFMDDHNDHEFVNGEKSNGKSNGFDPSTRL) the chain is Cytoplasmic.

This sequence belongs to the major facilitator superfamily. Sugar transporter (TC 2.A.1.1) family.

It is found in the cell membrane. In terms of biological role, mediates an active uptake of hexoses, probably by sugar/hydrogen symport. This Arabidopsis thaliana (Mouse-ear cress) protein is Sugar transport protein 13 (STP13).